A 336-amino-acid chain; its full sequence is Probable deoxyhypusine synthase (336 aa).

Residue lysine 308 is the Nucleophile of the active site.

Belongs to the deoxyhypusine synthase family. It depends on NAD(+) as a cofactor.

The enzyme catalyses [eIF5A protein]-L-lysine + spermidine = [eIF5A protein]-deoxyhypusine + propane-1,3-diamine. The protein operates within protein modification; eIF5A hypusination. Catalyzes the NAD-dependent oxidative cleavage of spermidine and the subsequent transfer of the butylamine moiety of spermidine to the epsilon-amino group of a specific lysine residue of the eIF-5A precursor protein to form the intermediate deoxyhypusine residue. This is Probable deoxyhypusine synthase from Thermococcus gammatolerans (strain DSM 15229 / JCM 11827 / EJ3).